The sequence spans 512 residues: Methionine--tRNA ligase (512 aa).

The 'HIGH' region signature appears at 11-21 (YYASGKPHIGH). 4 residues coordinate Zn(2+): Cys126, Cys129, Cys143, and His147. Positions 301–305 (KMSKS) match the 'KMSKS' region motif. Lys304 contributes to the ATP binding site.

The protein belongs to the class-I aminoacyl-tRNA synthetase family. MetG type 2A subfamily. In terms of assembly, monomer. Requires Zn(2+) as cofactor.

The protein localises to the cytoplasm. The catalysed reaction is tRNA(Met) + L-methionine + ATP = L-methionyl-tRNA(Met) + AMP + diphosphate. Is required not only for elongation of protein synthesis but also for the initiation of all mRNA translation through initiator tRNA(fMet) aminoacylation. The chain is Methionine--tRNA ligase (metG) from Mycoplasma genitalium (strain ATCC 33530 / DSM 19775 / NCTC 10195 / G37) (Mycoplasmoides genitalium).